The primary structure comprises 512 residues: Kynurenine 3-monooxygenase (512 aa).

Belongs to the aromatic-ring hydroxylase family. KMO subfamily. The cofactor is FAD.

It is found in the mitochondrion outer membrane. It carries out the reaction L-kynurenine + NADPH + O2 + H(+) = 3-hydroxy-L-kynurenine + NADP(+) + H2O. Its pathway is cofactor biosynthesis; NAD(+) biosynthesis; quinolinate from L-kynurenine: step 1/3. Catalyzes the hydroxylation of L-kynurenine (L-Kyn) to form 3-hydroxy-L-kynurenine (L-3OHKyn). Required for synthesis of quinolinic acid. The chain is Kynurenine 3-monooxygenase (nic-3) from Neurospora crassa (strain ATCC 24698 / 74-OR23-1A / CBS 708.71 / DSM 1257 / FGSC 987).